The chain runs to 363 residues: Trans-2,3-enoyl-CoA reductase-like (363 aa).

Ser37 bears the Phosphoserine mark. The next 3 helical transmembrane spans lie at 143–163 (WTTV…LFYL), 217–237 (LIMS…YINH), and 311–331 (ISFT…LMSI).

Belongs to the steroid 5-alpha reductase family. In terms of tissue distribution, predominantly expressed in the heart and skeletal muscle.

Its subcellular location is the membrane. It is found in the endoplasmic reticulum. In Homo sapiens (Human), this protein is Trans-2,3-enoyl-CoA reductase-like (TECRL).